Here is a 296-residue protein sequence, read N- to C-terminus: Glycine--tRNA ligase alpha subunit (296 aa).

The protein belongs to the class-II aminoacyl-tRNA synthetase family. As to quaternary structure, tetramer of two alpha and two beta subunits.

It is found in the cytoplasm. The enzyme catalyses tRNA(Gly) + glycine + ATP = glycyl-tRNA(Gly) + AMP + diphosphate. The polypeptide is Glycine--tRNA ligase alpha subunit (Exiguobacterium sibiricum (strain DSM 17290 / CCUG 55495 / CIP 109462 / JCM 13490 / 255-15)).